Here is a 403-residue protein sequence, read N- to C-terminus: UPF0284 protein PMT_1350 (403 aa).

Belongs to the UPF0284 family.

This Prochlorococcus marinus (strain MIT 9313) protein is UPF0284 protein PMT_1350.